Reading from the N-terminus, the 90-residue chain is C-C motif chemokine 4 homolog (90 aa).

A signal peptide spans Met1–Ala21. Disulfide bonds link Cys32-Cys56 and Cys33-Cys72.

The protein belongs to the intercrine beta (chemokine CC) family. Homodimer.

Its subcellular location is the secreted. Functionally, monokine with inflammatory and chemokinetic properties. This Gallus gallus (Chicken) protein is C-C motif chemokine 4 homolog (CCL4).